The primary structure comprises 2752 residues: MASEVVCGLIFRLLLPICLAVACAFRYNGLSFVYLIYLLLIPLFSEPTKTTMQGHTGRLLKSLCFISLSFLLLHIIFHITLVSLEAQHRIAPGYNCSTWEKTFRQIGFESLKGADAGNGIRVFVPDIGMFIASLTIWLLCRNIVQKPVTDEAAQSNPEFENEELAEGEKIDSEEALIYEEDFNGGDGVEGELEESTKLKMFRRLASVASKLKEFIGNMITTAGKVVVTILLGSSGMMLPSLTSSVYFFVFLGLCTWWSWCRTFDPLLFSCLCVLLAIFTAGHLIGLYLYQFQFFQEAVPPNDYYARLFGIKSVIQTDCSSTWKIIVNPDLSWYHHANPILLLVMYYTLATLIRIWLQEPLVQDEGTKEEDKALACSPIQITAGRRRSLWYATHYPTDERKLLSMTQDDYKPSDGLLVTVNGNPVDYHTIHPSLPMENGPGKADLYSTPQYRWEPSDESSEKREEEEEEKEEFEEERSREEKRSIKVHAMVSVFQFIMKQSYICALIAMMAWSITYHSWLTFVLLIWSCTLWMIRNRRKYAMISSPFMVVYGNLLLILQYIWSFELPEIKKVPGFLEKKEPGELASKILFTITFWLLLRQHLTEQKALQEKEALLSEVKIGSQENEEKDEELQDIQVEGEPKEEEEEEAKEEKQERKKVEQEEAEEEDEQDIMKVLGNLVVAMFIKYWIYVCGGMFFFVSFEGKIVMYKIIYMVLFLFCVALYQVHYEWWRKILKYFWMSVVIYTMLVLIFIYTYQFENFPGLWQNMTGLKKEKLEDLGLKQFTVAELFTRIFIPTSFLLVCILHLHYFHDRFLELTDLKSIPSKEDNTIYRLAHPEGSLPDLTMMHLTASLEKPEVRKLAEPGEEKLEGYSEKAQKGDLGKDSEESEEDGEEEEESEEEEETSDLRNKWHLVIDRLTVLFLKFLEYFHKLQVFMWWILELHIIKIVSSYIIWVSVKEVSLFNYVFLISWAFALPYAKLRRLASSVCTVWTCVIIVCKMLYQLQTIKPENFSVNCSLPNENQTNIPFNELNKSLLYSAPIDPTEWVGLRKSSPLLVYLRNNLLMLAILAFEVTIYRHQEYYRGRNNLTAPVSRTIFHDITRLHLDDGLINCAKYFINYFFYKFGLETCFLMSVNVIGQRMDFYAMIHACWLIAVLYRRRRKAIAEIWPKYCCFLACIITFQYFICIGIPPAPCRDYPWRFKGASFNDNIIKWLYFPDFIVRPNPVFLVYDFMLLLCASLQRQIFEDENKAAVRIMAGDNVEICMNLDAASFSQHNPVPDFIHCRSYLDMSKVIIFSYLFWFVLTIIFITGTTRISIFCMGYLVACFYFLLFGGDLLLKPIKSILRYWDWLIAYNVFVITMKNILSIGACGYIGTLVHNSCWLIQAFSLACTVKGYQMPAANSPCTLPSGEAGIIWDSICFAFLLLQRRVFMSYYFLHVVADIKASQILASRGAELFQATIVKAVKARIEEEKKSMDQLKRQMDRIKARQQKYKKGKERMLSLTQEPGEGQDMQKLSEEDDEREADKQKAKGKKKQWWRPWVDHASMVRSGDYYLFETDSEEEEEEELKKEDEEPPRRSAFQFVYQAWITDPKTALRQRHKEKKRSAREERKRRRKGSKEGPVEWEDREDEPIKKKSDGPDNIIKRIFNILKFTWVLFLATVDSFTTWLNSISREHIDISTVLRIERCMLTREIKKGNVPTRESIHMYYQNHIMNLSRESGLDTIDEHPGAASGAQTAHRMDSLDSHDSISSEPTQCTMLYSRQGTTETIEEVEAEQEEEAGSTAPEPREAKEYEATGYDVGAMGAEEASLTPEEELTQFSTLDGDVEAPPSYSKAVSFEHLSFGSQDDSAGKNRMAVSPDDSRTDKLGSSILPPLTHELTASELLLKKMFHDDELEESEKFYVGQPRFLLLFYAMYNTLVARSEMVCYFVIILNHMVSASMITLLLPILIFLWAMLSVPRPSRRFWMMAIVYTEVAIVVKYFFQFGFFPWNKNVEVNKDKPYHPPNIIGVEKKEGYVLYDLIQLLALFFHRSILKCHGLWDEDDMTESGMAREESDDELSLGHGRRDSSDSLKSINLAASVESVHVTFPEQQTAVRRKRSGSSSEPSQRSSFSSNRSQRGSTSTRNSSQKGSSVLSIKQKGKRELYMEKLQEHLIKAKAFTIKKTLEIYVPIKQFFYNLIHPEYSAVTDVYVLMFLADTVDFIIIVFGFWAFGKHSAAADITSSLSEDQVPGPFLVMVLIQFGTMVVDRALYLRKTVLGKVIFQVILVFGIHFWMFFILPGVTERKFSQNLVAQLWYFVKCVYFGLSAYQIRCGYPTRVLGNFLTKSYNYVNLFLFQGFRLVPFLTELRAVMDWVWTDTTLSLSSWICVEDIYAHIFILKCWRESEKRYPQPRGQKKKKVVKYGMGGMIIVLLICIVWFPLLFMSLIKSVAGVINQPLDVSVTITLGGYQPIFTMSAQQSQLKVMDQQSFNKFIQAFSRDTGAMQFLENYEKEDITVAELEGNSNSLWTISPPSKQKMIHELLDPNSSFSVVFSWSIQRNLSLGAKSEIATDKLSFPLKNITRKNIAKMIAGNSTESSKTPVTIEKIYPYYVKAPSDSNSKPIKQLLSENNFMDITIILSRDNTTKYNSEWWVLNLTGNRIYNPNSQALELVVFNDKVSPPSLGFLAGYGIMGLYASVVLVIGKFVREFFSGISHSIMFEELPNVDRILKLCTDIFLVRETGELELEEDLYAKLIFLYRSPETMIKWTREKTN.

Topologically, residues 1–12 (MASEVVCGLIFR) are cytoplasmic. Residues 13–24 (LLLPICLAVACA) traverse the membrane as a helical segment. Residues 25–30 (FRYNGL) are Extracellular-facing. Residues 31 to 43 (SFVYLIYLLLIPL) traverse the membrane as a helical segment. Residues 44–50 (FSEPTKT) lie on the Cytoplasmic side of the membrane. Residues 51 to 76 (TMQGHTGRLLKSLCFISLSFLLLHII) form a helical membrane-spanning segment. Over 77 to 122 (FHITLVSLEAQHRIAPGYNCSTWEKTFRQIGFESLKGADAGNGIRV) the chain is Extracellular. N-linked (GlcNAc...) asparagine glycosylation occurs at Asn-95. A helical transmembrane segment spans residues 123-141 (FVPDIGMFIASLTIWLLCR). Residues 142–221 (NIVQKPVTDE…KEFIGNMITT (80 aa)) are Cytoplasmic-facing. The chain crosses the membrane as a helical span at residues 222-237 (AGKVVVTILLGSSGMM). Residues 238–240 (LPS) are Extracellular-facing. Residues 241–258 (LTSSVYFFVFLGLCTWWS) form a helical membrane-spanning segment. Topologically, residues 259–264 (WCRTFD) are cytoplasmic. A helical membrane pass occupies residues 265 to 287 (PLLFSCLCVLLAIFTAGHLIGLY). The Extracellular segment spans residues 288–335 (LYQFQFFQEAVPPNDYYARLFGIKSVIQTDCSSTWKIIVNPDLSWYHH). Residues 336 to 355 (ANPILLLVMYYTLATLIRIW) form a helical membrane-spanning segment. The Cytoplasmic segment spans residues 356 to 492 (LQEPLVQDEG…SIKVHAMVSV (137 aa)). Positions 446 to 478 (STPQYRWEPSDESSEKREEEEEEKEEFEEERSR) are disordered. A compositionally biased stretch (acidic residues) spans 463-474 (EEEEEEKEEFEE). A helical membrane pass occupies residues 493-514 (FQFIMKQSYICALIAMMAWSIT). Residues 515–519 (YHSWL) are Extracellular-facing. The chain crosses the membrane as a helical span at residues 520–531 (TFVLLIWSCTLW). Topologically, residues 532-535 (MIRN) are cytoplasmic. Residues 536–562 (RRKYAMISSPFMVVYGNLLLILQYIWS) traverse the membrane as a helical segment. The Extracellular portion of the chain corresponds to 563-583 (FELPEIKKVPGFLEKKEPGEL). A helical membrane pass occupies residues 584 to 614 (ASKILFTITFWLLLRQHLTEQKALQEKEALL). Residues 615-685 (SEVKIGSQEN…GNLVVAMFIK (71 aa)) are Cytoplasmic-facing. Over residues 623-632 (ENEEKDEELQ) the composition is skewed to acidic residues. The disordered stretch occupies residues 623–664 (ENEEKDEELQDIQVEGEPKEEEEEEAKEEKQERKKVEQEEAE). Basic and acidic residues predominate over residues 649–660 (KEEKQERKKVEQ). The chain crosses the membrane as a helical span at residues 686–699 (YWIYVCGGMFFFVS). Topologically, residues 700-705 (FEGKIV) are extracellular. Residues 706-724 (MYKIIYMVLFLFCVALYQV) form a helical membrane-spanning segment. The Cytoplasmic portion of the chain corresponds to 725-733 (HYEWWRKIL). Residues 734–753 (KYFWMSVVIYTMLVLIFIYT) traverse the membrane as a helical segment. Residues 754–785 (YQFENFPGLWQNMTGLKKEKLEDLGLKQFTVA) lie on the Extracellular side of the membrane. The helical transmembrane segment at 786 to 807 (ELFTRIFIPTSFLLVCILHLHY) threads the bilayer. The Cytoplasmic segment spans residues 808–940 (FHDRFLELTD…QVFMWWILEL (133 aa)). Ser-838 carries the post-translational modification Phosphoserine. Basic and acidic residues predominate over residues 862 to 883 (PGEEKLEGYSEKAQKGDLGKDS). The segment at 862–902 (PGEEKLEGYSEKAQKGDLGKDSEESEEDGEEEEESEEEEET) is disordered. Acidic residues predominate over residues 884-902 (EESEEDGEEEEESEEEEET). A helical membrane pass occupies residues 941–956 (HIIKIVSSYIIWVSVK). The Extracellular segment spans residues 957 to 962 (EVSLFN). A helical membrane pass occupies residues 963–972 (YVFLISWAFA). The Cytoplasmic segment spans residues 973 to 980 (LPYAKLRR). Residues 981–1001 (LASSVCTVWTCVIIVCKMLYQ) traverse the membrane as a helical segment. Residues 1002–1057 (LQTIKPENFSVNCSLPNENQTNIPFNELNKSLLYSAPIDPTEWVGLRKSSPLLVYL) are Extracellular-facing. Residue Asn-1013 is glycosylated (N-linked (GlcNAc...) asparagine). The cysteines at positions 1014 and 1192 are disulfide-linked. Residues 1058 to 1082 (RNNLLMLAILAFEVTIYRHQEYYRG) form a helical membrane-spanning segment. Residues 1083–1123 (RNNLTAPVSRTIFHDITRLHLDDGLINCAKYFINYFFYKFG) lie on the Cytoplasmic side of the membrane. A helical membrane pass occupies residues 1124 to 1138 (LETCFLMSVNVIGQR). The Extracellular portion of the chain corresponds to 1139–1140 (MD). The helical transmembrane segment at 1141–1154 (FYAMIHACWLIAVL) threads the bilayer. Residues 1155-1165 (YRRRRKAIAEI) are Cytoplasmic-facing. A helical membrane pass occupies residues 1166-1185 (WPKYCCFLACIITFQYFICI). The Extracellular portion of the chain corresponds to 1186 to 1222 (GIPPAPCRDYPWRFKGASFNDNIIKWLYFPDFIVRPN). A helical membrane pass occupies residues 1223 to 1243 (PVFLVYDFMLLLCASLQRQIF). The Cytoplasmic portion of the chain corresponds to 1244–1297 (EDENKAAVRIMAGDNVEICMNLDAASFSQHNPVPDFIHCRSYLDMSKVIIFSYL). A helical membrane pass occupies residues 1298–1310 (FWFVLTIIFITGT). Residues 1311-1316 (TRISIF) are Extracellular-facing. The helical transmembrane segment at 1317 to 1329 (CMGYLVACFYFLL) threads the bilayer. Over 1330-1338 (FGGDLLLKP) the chain is Cytoplasmic. Residues 1339 to 1364 (IKSILRYWDWLIAYNVFVITMKNILS) form a helical membrane-spanning segment. The Extracellular segment spans residues 1365 to 1413 (IGACGYIGTLVHNSCWLIQAFSLACTVKGYQMPAANSPCTLPSGEAGII). A helical membrane pass occupies residues 1414–1430 (WDSICFAFLLLQRRVFM). The Cytoplasmic segment spans residues 1431 to 1921 (SYYFLHVVAD…YAMYNTLVAR (491 aa)). The stretch at 1458–1529 (TIVKAVKARI…EREADKQKAK (72 aa)) forms a coiled coil. Disordered stretches follow at residues 1488–1534 (QQKY…KKKQ), 1593–1636 (ALRQ…KKSD), and 1844–1868 (SQDDSAGKNRMAVSPDDSRTDKLGS). Over residues 1594 to 1615 (LRQRHKEKKRSAREERKRRRKG) the composition is skewed to basic residues. Residues 1922 to 1936 (SEMVCYFVIILNHMV) form a helical membrane-spanning segment. Residues 1937-1943 (SASMITL) are Extracellular-facing. Residues 1944–1955 (LLPILIFLWAML) form a helical membrane-spanning segment. The Cytoplasmic segment spans residues 1956–1961 (SVPRPS). Residues 1962–1983 (RRFWMMAIVYTEVAIVVKYFFQ) form a helical membrane-spanning segment. Over 1984–2016 (FGFFPWNKNVEVNKDKPYHPPNIIGVEKKEGYV) the chain is Extracellular. A helical membrane pass occupies residues 2017–2035 (LYDLIQLLALFFHRSILKC). The Cytoplasmic portion of the chain corresponds to 2036–2189 (HGLWDEDDMT…HPEYSAVTDV (154 aa)). Disordered stretches follow at residues 2047–2069 (SGMAREESDDELSLGHGRRDSSD) and 2090–2135 (QQTA…SVLS). Positions 2100–2127 (GSSSEPSQRSSFSSNRSQRGSTSTRNSS) are enriched in low complexity. Residues 2190-2209 (YVLMFLADTVDFIIIVFGFW) form a helical membrane-spanning segment. At 2210–2231 (AFGKHSAAADITSSLSEDQVPG) the chain is on the extracellular side. A helical transmembrane segment spans residues 2232–2252 (PFLVMVLIQFGTMVVDRALYL). Over 2253 to 2256 (RKTV) the chain is Cytoplasmic. The helical transmembrane segment at 2257 to 2280 (LGKVIFQVILVFGIHFWMFFILPG) threads the bilayer. Over 2281 to 2289 (VTERKFSQN) the chain is Extracellular. The chain crosses the membrane as a helical span at residues 2290 to 2312 (LVAQLWYFVKCVYFGLSAYQIRC). Over 2313-2397 (GYPTRVLGNF…YPQPRGQKKK (85 aa)) the chain is Cytoplasmic. Residues 2398–2421 (KVVKYGMGGMIIVLLICIVWFPLL) form a helical membrane-spanning segment. At 2422–2669 (FMSLIKSVAG…PSLGFLAGYG (248 aa)) the chain is on the extracellular side. A helical membrane pass occupies residues 2670-2690 (IMGLYASVVLVIGKFVREFFS). The Cytoplasmic portion of the chain corresponds to 2691-2752 (GISHSIMFEE…MIKWTREKTN (62 aa)).

The protein belongs to the PIEZO (TC 1.A.75) family. Homotrimer; the homotrimer forms a propeller-shaped Piezo channel with a cation-ion conducting pore. Heterotrimeric interaction may occur between PIEZO1 and PIEZO2. Interacts with STOML3. Interacts with TMC7; the interaction inhibits PIEZO2-conducted mechanically activated currents. Interacts with TMC1; the interaction may be part of the MET complex. Interacts with MDFIC (via C-terminus); the interaction prolongs Piezo channel inactivation. Interacts with MDFI (via C-terminus); the interaction prolongs Piezo channel inactivation.

The protein resides in the cell membrane. The catalysed reaction is Ca(2+)(in) = Ca(2+)(out). Its activity is regulated as follows. Regulated by auxillary subunits MDFIC and MDFI. Channel activity is inhibited by TMEM120A. Phosphatidic acid and lysophosphatidic acid inhibit PIEZO2 channel activity. Functionally, pore-forming subunit of the mechanosensitive non-specific cation Piezo channel required for rapidly adapting mechanically activated (MA) currents and has a key role in sensing touch and tactile pain. Piezo channels are homotrimeric three-blade propeller-shaped structures that utilize a cap-motion and plug-and-latch mechanism to gate their ion-conducting pathways. Expressed in sensory neurons, is essential for diverse physiological processes, including respiratory control, systemic metabolism, urinary function, and proprioception. Mediates airway stretch sensing, enabling efficient respiration at birth and maintaining normal breathing in adults. It regulates brown and beige adipose tissue morphology and function, preventing systemic hypermetabolism. In the lower urinary tract, acts as a sensor in both the bladder urothelium and innervating sensory neurons being required for bladder-stretch sensing and urethral micturition reflexes, ensuring proper urinary function. Additionally, PIEZO2 serves as the principal mechanotransducer in proprioceptors, facilitating proprioception and coordinated body movements. In inner ear hair cells, PIEZO1/2 subunits may constitute part of the mechanotransducer (MET) non-selective cation channel complex where they may act as pore-forming ion-conducting component in the complex. Required for Merkel-cell mechanotransduction. Plays a major role in light-touch mechanosensation. This chain is Piezo-type mechanosensitive ion channel component 2, found in Homo sapiens (Human).